Here is a 184-residue protein sequence, read N- to C-terminus: ATP synthase subunit b, chloroplastic (184 aa).

Residues 27-49 (LATNPINLSVVLGVLIFFGKGVL) traverse the membrane as a helical segment.

This sequence belongs to the ATPase B chain family. F-type ATPases have 2 components, F(1) - the catalytic core - and F(0) - the membrane proton channel. F(1) has five subunits: alpha(3), beta(3), gamma(1), delta(1), epsilon(1). F(0) has four main subunits: a(1), b(1), b'(1) and c(10-14). The alpha and beta chains form an alternating ring which encloses part of the gamma chain. F(1) is attached to F(0) by a central stalk formed by the gamma and epsilon chains, while a peripheral stalk is formed by the delta, b and b' chains.

Its subcellular location is the plastid. It localises to the chloroplast thylakoid membrane. F(1)F(0) ATP synthase produces ATP from ADP in the presence of a proton or sodium gradient. F-type ATPases consist of two structural domains, F(1) containing the extramembraneous catalytic core and F(0) containing the membrane proton channel, linked together by a central stalk and a peripheral stalk. During catalysis, ATP synthesis in the catalytic domain of F(1) is coupled via a rotary mechanism of the central stalk subunits to proton translocation. In terms of biological role, component of the F(0) channel, it forms part of the peripheral stalk, linking F(1) to F(0). The sequence is that of ATP synthase subunit b, chloroplastic from Pelargonium hortorum (Common geranium).